We begin with the raw amino-acid sequence, 523 residues long: Putative UDP-glucuronosyltransferase ugt-50 (523 aa).

Residues 1-25 (MHYSQMRWMFFCLTALLHGSFIVNA) form the signal peptide. N-linked (GlcNAc...) asparagine glycans are attached at residues asparagine 84, asparagine 248, asparagine 283, and asparagine 487. The chain crosses the membrane as a helical span at residues 490–508 (IIEHNHLDLFFYLCIISLL).

It belongs to the UDP-glycosyltransferase family.

It localises to the membrane. It carries out the reaction glucuronate acceptor + UDP-alpha-D-glucuronate = acceptor beta-D-glucuronoside + UDP + H(+). This Caenorhabditis elegans protein is Putative UDP-glucuronosyltransferase ugt-50 (ugt-50).